A 338-amino-acid polypeptide reads, in one-letter code: Methionyl-tRNA formyltransferase (338 aa).

Position 110–113 (serine 110–proline 113) interacts with (6S)-5,6,7,8-tetrahydrofolate.

Belongs to the Fmt family.

The catalysed reaction is L-methionyl-tRNA(fMet) + (6R)-10-formyltetrahydrofolate = N-formyl-L-methionyl-tRNA(fMet) + (6S)-5,6,7,8-tetrahydrofolate + H(+). Attaches a formyl group to the free amino group of methionyl-tRNA(fMet). The formyl group appears to play a dual role in the initiator identity of N-formylmethionyl-tRNA by promoting its recognition by IF2 and preventing the misappropriation of this tRNA by the elongation apparatus. In Synechococcus sp. (strain CC9902), this protein is Methionyl-tRNA formyltransferase.